We begin with the raw amino-acid sequence, 160 residues long: Afimbrial adhesin AFA-III (160 aa).

An N-terminal signal peptide occupies residues 1 to 21 (MKKLAIMAAASMVFAVSSAHA). Residues 22–75 (GFTPSGTTGTTKLTVTEECQVRVGDLTVAKTRGQLTDAAPIGPVTVQALGCNAR) form a receptor-binding region.

The protein belongs to the Dr-adhesin family.

It is found in the fimbrium. Functionally, hemagglutinins of uropathogenic E.coli mediate adherence to the upper urinary tract. These adhesins bind to the Dr blood group antigen and also agglutinate human erythrocytes in the presence of D-mannose (mannose-resistant hemagglutination (MRHA)). The protein is Afimbrial adhesin AFA-III (afaE3) of Escherichia coli.